Here is a 336-residue protein sequence, read N- to C-terminus: Mitochondrial thiamine diphosphate carrier 2 (336 aa).

The next 6 helical transmembrane spans lie at 11-27 (RRALVDSLAGAISGGIS), 88-105 (VPALLMYMPYTAIQFTVL), 127-150 (YLSYVSGALAGCAATIGSYPFDLL), 182-199 (LYSGLSPTLVEIIPYAGL), 230-246 (SVSSFQLFLCGFAAGTF), and 303-322 (GLFPSLVKSAPAGAVTFVAY). Solcar repeat units lie at residues 11–111 (RRAL…LKTF), 124–210 (LSPY…FKRS), and 231–328 (VSSF…ISDW).

It belongs to the mitochondrial carrier (TC 2.A.29) family. As to expression, ubiquitous.

It is found in the mitochondrion inner membrane. In terms of biological role, mitochondrial transporter that mediates uptake of thiamine diphosphate (ThDP) into mitochondria. The chain is Mitochondrial thiamine diphosphate carrier 2 from Zea mays (Maize).